The chain runs to 588 residues: Sperm-associated microtubule inner protein 4 (588 aa).

The residue at position 219 (threonine 219) is a Phosphothreonine. Phosphoserine is present on residues serine 406, serine 421, and serine 427. At tyrosine 441 the chain carries Phosphotyrosine. 3 positions are modified to phosphoserine: serine 457, serine 484, and serine 516.

In terms of tissue distribution, predominantly expressed in the testes.

The protein localises to the cytoplasm. The protein resides in the cytoskeleton. Its subcellular location is the microtubule organizing center. It localises to the centrosome. It is found in the flagellum axoneme. Functionally, microtubule inner protein (MIP) part of the dynein-decorated doublet microtubules (DMTs) in flagellum axoneme. May serve to reinforce and thus stabilize the microtubule structure in the sperm flagella. The polypeptide is Sperm-associated microtubule inner protein 4 (Spmip4) (Mus musculus (Mouse)).